We begin with the raw amino-acid sequence, 295 residues long: Mediator of RNA polymerase II transcription subunit 27 (295 aa).

The protein belongs to the Mediator complex subunit 27 family. Component of the Mediator complex.

The protein resides in the nucleus. Component of the Mediator complex, a coactivator involved in the regulated transcription of nearly all RNA polymerase II-dependent genes. Mediator functions as a bridge to convey information from gene-specific regulatory proteins to the basal RNA polymerase II transcription machinery. Mediator is recruited to promoters by direct interactions with regulatory proteins and serves as a scaffold for the assembly of a functional preinitiation complex with RNA polymerase II and the general transcription factors. The polypeptide is Mediator of RNA polymerase II transcription subunit 27 (MED27) (Aedes aegypti (Yellowfever mosquito)).